Consider the following 130-residue polypeptide: Large ribosomal subunit protein bL20c (130 aa).

This sequence belongs to the bacterial ribosomal protein bL20 family.

Its subcellular location is the plastid. It is found in the chloroplast. Functionally, binds directly to 23S ribosomal RNA and is necessary for the in vitro assembly process of the 50S ribosomal subunit. It is not involved in the protein synthesizing functions of that subunit. This Oenothera argillicola (Appalachian evening primrose) protein is Large ribosomal subunit protein bL20c.